We begin with the raw amino-acid sequence, 163 residues long: Staphylokinase (163 aa).

A signal peptide spans 1–27 (MLKRSLLFLTVLLLLFSFSSITNEVSA).

Belongs to the staphylokinase family.

It localises to the secreted. Potent plasminogen activator that converts plasminogen into plasmin. It forms a 1:1 complex with plasmin, which in turn activates other plasminogen molecules. The protein is Staphylokinase (sak) of Staphylococcus aureus (Bacteriophage P42D).